A 392-amino-acid polypeptide reads, in one-letter code: MKPSPSFPEPVLIETTEALAALCDRLAAEPFVTVDTEFMREKTYFPELCVVQLGGANDVAVIDAQAEGLDLAPLGALFANPAVTKVFHACRQDIEIFLLKFGAVPAPLFDTQVAAMVAGFGDQVGYDTLVSSLAGGRIDKAHRFSDWSARPLSRAQIAYAAADVTWLRPVYEGLRARLTREGRLDWVAEEAAVLADPATYRTEPEDAWRRLKLRGGNRRQLALVKAIAAWREREAMRVNVPRQRIVRDEQIPELAALAPADAEGLTRVRGISSGFAGGKSGRALLEVIASTKAIPDAELPEAPRAPESARPPAGLVALLKVLLAERAGANHVAARLIASAEDIDRLASEDAPNLPCLQGWRAELFGNDALRLKGGRIALAARGRRVEVVDLP.

Residues 12–178 (LIETTEALAA…PVYEGLRARL (167 aa)) enclose the 3'-5' exonuclease domain. The HRDC domain occupies 217–298 (NRRQLALVKA…ASTKAIPDAE (82 aa)).

The protein belongs to the RNase D family. It depends on a divalent metal cation as a cofactor.

The protein resides in the cytoplasm. The catalysed reaction is Exonucleolytic cleavage that removes extra residues from the 3'-terminus of tRNA to produce 5'-mononucleotides.. Functionally, exonuclease involved in the 3' processing of various precursor tRNAs. Initiates hydrolysis at the 3'-terminus of an RNA molecule and releases 5'-mononucleotides. The polypeptide is Ribonuclease D (Acidiphilium cryptum (strain JF-5)).